The following is a 561-amino-acid chain: Excitatory amino acid transporter 4 (561 aa).

Over 1–52 (MSSHGNSLFLRESGAGGGCLQGLQDSLQQRALRTRLRLQTMTREHVRRFLRR) the chain is Cytoplasmic. Position 2 is a phosphoserine (Ser-2). The next 3 helical transmembrane spans lie at 53-73 (NAFILLTVSAVIIGVSLAFAL), 96-116 (MLQMLVLPLIVSSRVTGMASL), and 130-150 (VYYMVTTVIAVFIGILMVTII). N-linked (GlcNAc...) asparagine glycosylation is found at Asn-213, Asn-229, and Asn-236. 3 helical membrane passes run 259 to 282 (SANGINALGLVVFSVAFGLVIGGM), 292 to 319 (FFDSLNEAIMRLVGIIIWYAPVGILFLI), and 341 to 362 (LTVIVGLFLHAGGVLPLIYFLV). The discontinuously helical intramembrane region spans 368–398 (FPFIGGILQALITAMGTSSSSATLPITFRCL). 385–387 (SSS) provides a ligand contact to L-aspartate. The helical transmembrane segment at 408–434 (ITRFVLPVGATVNMDGTALYEALAAIF) threads the bilayer. Na(+)-binding residues include Gly-416, Thr-418, and Asn-420. Residues Thr-424, 465–469 (IPQAG), Asp-498, and Asn-505 each bind L-aspartate. Residues 448–481 (ITTISITATAASVGAAGIPQAGLVTMVIVLTSVG) constitute an intramembrane region (discontinuously helical). Residues 495 to 516 (WFLDRLRTMTNVLGDSIGAAVI) form a helical membrane-spanning segment. Residues Asn-505 and Asp-509 each contribute to the Na(+) site.

Belongs to the dicarboxylate/amino acid:cation symporter (DAACS) (TC 2.A.23) family. SLC1A6 subfamily. As to quaternary structure, homotrimer.

It is found in the cell membrane. It carries out the reaction K(+)(in) + L-glutamate(out) + 3 Na(+)(out) + H(+)(out) = K(+)(out) + L-glutamate(in) + 3 Na(+)(in) + H(+)(in). The catalysed reaction is K(+)(in) + L-aspartate(out) + 3 Na(+)(out) + H(+)(out) = K(+)(out) + L-aspartate(in) + 3 Na(+)(in) + H(+)(in). It catalyses the reaction D-aspartate(out) + K(+)(in) + 3 Na(+)(out) + H(+)(out) = D-aspartate(in) + K(+)(out) + 3 Na(+)(in) + H(+)(in). In terms of biological role, sodium-dependent, high-affinity amino acid transporter that mediates the uptake of L-glutamate and also L-aspartate and D-aspartate. Functions as a symporter that transports one amino acid molecule together with two or three Na(+) ions and one proton, in parallel with the counter-transport of one K(+) ion. Mediates Cl(-) flux that is not coupled to amino acid transport; this avoids the accumulation of negative charges due to aspartate and Na(+) symport. Plays a redundant role in the rapid removal of released glutamate from the synaptic cleft, which is essential for terminating the postsynaptic action of glutamate. The sequence is that of Excitatory amino acid transporter 4 (Slc1a6) from Rattus norvegicus (Rat).